The primary structure comprises 313 residues: D-alanine--D-alanine ligase (313 aa).

The ATP-grasp domain maps to 108 to 308; the sequence is KLVWQQTGVP…YSELVVKVLS (201 aa). 138-193 contacts ATP; sequence VAKLGLPLFVKPASEGSSVAVLKVKTADALPAALAEAATHDKIVIVEKSIEGGGEY. Asp262, Glu275, and Asn277 together coordinate Mg(2+).

Belongs to the D-alanine--D-alanine ligase family. Mg(2+) serves as cofactor. The cofactor is Mn(2+).

The protein resides in the cytoplasm. The catalysed reaction is 2 D-alanine + ATP = D-alanyl-D-alanine + ADP + phosphate + H(+). It functions in the pathway cell wall biogenesis; peptidoglycan biosynthesis. In terms of biological role, cell wall formation. The sequence is that of D-alanine--D-alanine ligase from Burkholderia multivorans (strain ATCC 17616 / 249).